The following is a 123-amino-acid chain: Small ribosomal subunit protein uS12 (123 aa).

Position 89 is a 3-methylthioaspartic acid (D89).

The protein belongs to the universal ribosomal protein uS12 family. In terms of assembly, part of the 30S ribosomal subunit. Contacts proteins S8 and S17. May interact with IF1 in the 30S initiation complex.

With S4 and S5 plays an important role in translational accuracy. Functionally, interacts with and stabilizes bases of the 16S rRNA that are involved in tRNA selection in the A site and with the mRNA backbone. Located at the interface of the 30S and 50S subunits, it traverses the body of the 30S subunit contacting proteins on the other side and probably holding the rRNA structure together. The combined cluster of proteins S8, S12 and S17 appears to hold together the shoulder and platform of the 30S subunit. The chain is Small ribosomal subunit protein uS12 from Mesorhizobium japonicum (strain LMG 29417 / CECT 9101 / MAFF 303099) (Mesorhizobium loti (strain MAFF 303099)).